The following is a 96-amino-acid chain: Bacterial microcompartment shell protein EutM (96 aa).

A BMC domain is found at 3–87 (ALGMIETRGL…PHGDLEEVFP (85 aa)).

Belongs to the bacterial microcompartments protein family. Homohexamer with a central pore of up to 8.6 Angstroms diameter. The hexamers pack into a two-dimensional array. Interacts with EutQ; a probably cytoplasm-facing helix (Val-49 to Gln-64) interacts with N-terminus of EutQ.

The protein localises to the bacterial microcompartment. Its pathway is amine and polyamine degradation; ethanolamine degradation. Functionally, probably a major component of the bacterial microcompartment (BMC) shell dedicated to ethanolamine degradation. Each homohexamer has a central pore with an opening of up to 8.6 Angstroms. A positively-charged funnel leads to the pore from each side of the hexamer. The pore probably allows metabolite passage into and out of the BMC. Expression of eutK, eutL, eutM, eutN, eutS (eutSMNLK) in E.coli leads to formation of a single BMC. Expression alone leads to thick filaments that interfere with cell separation. Coexpression of eutQ with eutSMNLK permits E.coli to make cells with more than one mobile BMC, as is usual in vivo. May play a role in BMC shell biogenesis. Can replace homolog pduA in the pdu operon, cells grow better than wild-type on 1,2-propanediol and vitamin B12. Protein is incorporated into the pdu BMC microcompartment. The ethanolamine (EA) catabolic bacterial microcompartment (BMC) probably concentrates low levels of ethanolamine catabolic enzymes, concentrates volatile reaction intermediates, keeps the level of toxic acetaldehyde low, generates enough acetyl-CoA to support cell growth, and maintains a pool of free coenzyme A (CoA) and NAD. Deletion of BMC genes (eutK, eutL, eutM) restores growth of eutD deletions, suggesting there are dedicated pools of coenzyme A (CoA) and NAD in the BMC. In terms of biological role, expression of the eut operon allows this bacteria to use ethanolamine as a carbon, nitrogen and energy source. It relies on cobalamin (vitamin B12) both as a cofactor for the ethanolamine ammonia-lyase (EAL) activity and to induce the operon. EA enhances bacterial survival in macrophages in a concentration-dependent manner, suggesting it is an important nutrient during infection. This is Bacterial microcompartment shell protein EutM from Salmonella typhimurium (strain LT2 / SGSC1412 / ATCC 700720).